A 167-amino-acid chain; its full sequence is Small ribosomal subunit protein uS5 (167 aa).

The region spanning 12-75 (LQEKLIAVNR…EKARRNMVTV (64 aa)) is the S5 DRBM domain.

Belongs to the universal ribosomal protein uS5 family. Part of the 30S ribosomal subunit. Contacts proteins S4 and S8.

Functionally, with S4 and S12 plays an important role in translational accuracy. Its function is as follows. Located at the back of the 30S subunit body where it stabilizes the conformation of the head with respect to the body. This Shewanella sp. (strain W3-18-1) protein is Small ribosomal subunit protein uS5.